Reading from the N-terminus, the 394-residue chain is Lipase 3 (394 aa).

Positions 1–20 (MTRGALKVTILLVGLGLVLA) are cleaved as a signal peptide. N-linked (GlcNAc...) asparagine glycosylation occurs at N131. Residues S164 and H369 each act as charge relay system in the active site.

The protein belongs to the AB hydrolase superfamily. Lipase family. Fat body.

The protein is Lipase 3 (Lip3) of Drosophila melanogaster (Fruit fly).